The primary structure comprises 118 residues: Small ribosomal subunit protein bTHXc (118 aa).

Residues 1–55 (MASLILGAPPRVTVALPSSRLSSSHSETAGVSLSCFTHQFSLSTSSSSSIPLVYC) constitute a chloroplast transit peptide. The segment at 61 to 118 (KTAKGKRFNHSFGNARPRNKSKGRGPERVPVPPAPPRKDKFENDEKIKIDIDESLFSN) is disordered. Over residues 96–111 (PRKDKFENDEKIKIDI) the composition is skewed to basic and acidic residues. S117 is modified (phosphoserine).

The protein belongs to the bacterial ribosomal protein bTHX family. Part of the 30S ribosomal subunit.

It localises to the plastid. The protein localises to the chloroplast. This chain is Small ribosomal subunit protein bTHXc (RPS31), found in Arabidopsis thaliana (Mouse-ear cress).